The chain runs to 155 residues: S-ribosylhomocysteine lyase (155 aa).

Fe cation contacts are provided by histidine 57, histidine 61, and cysteine 124.

Belongs to the LuxS family. In terms of assembly, homodimer. Requires Fe cation as cofactor.

The catalysed reaction is S-(5-deoxy-D-ribos-5-yl)-L-homocysteine = (S)-4,5-dihydroxypentane-2,3-dione + L-homocysteine. In terms of biological role, involved in the synthesis of autoinducer 2 (AI-2) which is secreted by bacteria and is used to communicate both the cell density and the metabolic potential of the environment. The regulation of gene expression in response to changes in cell density is called quorum sensing. Catalyzes the transformation of S-ribosylhomocysteine (RHC) to homocysteine (HC) and 4,5-dihydroxy-2,3-pentadione (DPD). This is S-ribosylhomocysteine lyase from Listeria monocytogenes serotype 4a (strain HCC23).